The sequence spans 223 residues: Ribosomal RNA small subunit methyltransferase G (223 aa).

S-adenosyl-L-methionine-binding positions include G83, L88, A134–E135, and R152.

It belongs to the methyltransferase superfamily. RNA methyltransferase RsmG family.

The protein localises to the cytoplasm. In terms of biological role, specifically methylates the N7 position of guanine in position 518 of 16S rRNA. The polypeptide is Ribosomal RNA small subunit methyltransferase G (Corynebacterium diphtheriae (strain ATCC 700971 / NCTC 13129 / Biotype gravis)).